The following is an 84-amino-acid chain: UPF0410 protein YmgE (84 aa).

3 helical membrane-spanning segments follow: residues 1–21, 27–47, and 58–78; these read MGII…KLIM, GGFF…GWLA, and GFNL…LGIF.

It belongs to the UPF0410 family.

It localises to the cell inner membrane. In Escherichia coli (strain K12), this protein is UPF0410 protein YmgE (ymgE).